Here is a 24-residue protein sequence, read N- to C-terminus: Cytochrome c oxidase subunit 5A-2, mitochondrial (24 aa).

The protein belongs to the cytochrome c oxidase subunit 5A family. As to quaternary structure, component of the cytochrome c oxidase (complex IV, CIV), a multisubunit enzyme composed of 14 subunits. The complex is composed of a catalytic core of 3 subunits MT-CO1, MT-CO2 and MT-CO3, encoded in the mitochondrial DNA, and 11 supernumerary subunits COX4I, COX5A, COX5B, COX6A, COX6B, COX6C, COX7A, COX7B, COX7C, COX8 and NDUFA4, which are encoded in the nuclear genome. The complex exists as a monomer or a dimer and forms supercomplexes (SCs) in the inner mitochondrial membrane with NADH-ubiquinone oxidoreductase (complex I, CI) and ubiquinol-cytochrome c oxidoreductase (cytochrome b-c1 complex, complex III, CIII), resulting in different assemblies (supercomplex SCI(1)III(2)IV(1) and megacomplex MCI(2)III(2)IV(2)).

The protein resides in the mitochondrion inner membrane. The protein operates within energy metabolism; oxidative phosphorylation. Its function is as follows. Component of the cytochrome c oxidase, the last enzyme in the mitochondrial electron transport chain which drives oxidative phosphorylation. The respiratory chain contains 3 multisubunit complexes succinate dehydrogenase (complex II, CII), ubiquinol-cytochrome c oxidoreductase (cytochrome b-c1 complex, complex III, CIII) and cytochrome c oxidase (complex IV, CIV), that cooperate to transfer electrons derived from NADH and succinate to molecular oxygen, creating an electrochemical gradient over the inner membrane that drives transmembrane transport and the ATP synthase. Cytochrome c oxidase is the component of the respiratory chain that catalyzes the reduction of oxygen to water. Electrons originating from reduced cytochrome c in the intermembrane space (IMS) are transferred via the dinuclear copper A center (CU(A)) of subunit 2 and heme A of subunit 1 to the active site in subunit 1, a binuclear center (BNC) formed by heme A3 and copper B (CU(B)). The BNC reduces molecular oxygen to 2 water molecules using 4 electrons from cytochrome c in the IMS and 4 protons from the mitochondrial matrix. The sequence is that of Cytochrome c oxidase subunit 5A-2, mitochondrial from Thunnus obesus (Bigeye tuna).